The sequence spans 825 residues: IQ and AAA domain-containing protein 1-like (825 aa).

The region spanning 206-235 (RDQGAIVIQKVWKGYLQRKRIEQDRRVEME) is the IQ domain. Residues 344-366 (QAQESRKKDQEKKEKNKEKEKEK) are compositionally biased toward basic and acidic residues. 2 disordered regions span residues 344–378 (QAQESRKKDQEKKEKNKEKEKEKKEKKKKKVKEEK) and 459–487 (DREETRPLKSPKKKGGKKSGKKKKEKDLT). Basic residues predominate over residues 467 to 482 (KSPKKKGGKKSGKKKK). 572-579 (GPSGMGKK) provides a ligand contact to ATP.

This sequence belongs to the AAA ATPase family.

This is IQ and AAA domain-containing protein 1-like (Iqca1l) from Mus musculus (Mouse).